The chain runs to 630 residues: Chaperone protein HtpG (630 aa).

Residues Met-1 to Arg-327 are a; substrate-binding. The tract at residues Glu-328–Arg-551 is b. A compositionally biased stretch (basic and acidic residues) spans Thr-483–Thr-499. The disordered stretch occupies residues Thr-483 to Asp-504. The interval Phe-552 to Asn-630 is c.

This sequence belongs to the heat shock protein 90 family. Homodimer.

Its subcellular location is the cytoplasm. In terms of biological role, molecular chaperone. Has ATPase activity. In Orientia tsutsugamushi (strain Boryong) (Rickettsia tsutsugamushi), this protein is Chaperone protein HtpG.